We begin with the raw amino-acid sequence, 154 residues long: Ribosome maturation factor RimP (154 aa).

It belongs to the RimP family.

The protein localises to the cytoplasm. Functionally, required for maturation of 30S ribosomal subunits. The chain is Ribosome maturation factor RimP from Acetivibrio thermocellus (strain ATCC 27405 / DSM 1237 / JCM 9322 / NBRC 103400 / NCIMB 10682 / NRRL B-4536 / VPI 7372) (Clostridium thermocellum).